A 311-amino-acid polypeptide reads, in one-letter code: MSNAEHLANIMVERFISAVKNGVDLVPVVADSTSTAKIAPFIKEFPDRLVNVGIAEQSLVGCAAGLALGGKVAVTCNAAPFLISRANEQVKVDVCYNNTNVKLFGLNSGASYGPLASTHHSIDDIGVMRGFGNIQIFAPSSPNECRQIIDYAINYVGPVYIRLDGKELPEIHNDDYEFVPGQIDVLRKGGKIALVAMGSTVYEIVDAAVKLAEKGIEVTVVNVPSIRPCDTEALFNAIKDCKYVISVEEHNINGGVGSLVAEVIAEHGAPITLKRRGIADGGYALAGDRKSMRKHHGIDADSIVDLALSLN.

It belongs to the transketolase family. As to quaternary structure, probable heterodimer composed of AptA and AptB. Thiamine diphosphate is required as a cofactor.

It carries out the reaction apulose 4-phosphate + D-glyceraldehyde 3-phosphate = D-xylulose 5-phosphate + dihydroxyacetone phosphate. Its pathway is carbohydrate metabolism. Involved in catabolism of D-apiose. Catalyzes the transfer of the glycolaldehyde group from apulose-4-phosphate to D-glyceraldehyde 3-phosphate, generating dihydroxyacetone phosphate and D-xylulose-5-phosphate. The protein is Apulose-4-phosphate transketolase subunit B of Actinobacillus succinogenes (strain ATCC 55618 / DSM 22257 / CCUG 43843 / 130Z).